We begin with the raw amino-acid sequence, 434 residues long: Cysteine proteinase 6 (434 aa).

The N-terminal stretch at 1–19 (MKVLSALCVLLVSVATAKQ) is a signal peptide. The propeptide at 20 to 113 (QLSELQYRNA…SEKVFGGVQA (94 aa)) is activation peptide. 2 disulfides stabilise this stretch: Cys133/Cys178 and Cys169/Cys211. Residue Cys136 is part of the active site. A glycan (N-linked (GlcNAc...) asparagine) is linked at Asn227. The cysteines at positions 269 and 416 are disulfide-linked. His276 is a catalytic residue. Residues 285–384 (SGSSGSQSQS…GGNSNSGDYP (100 aa)) are disordered. The segment covering 288–347 (SGSQSQSAGSQSQSSNNNWSESSQSQDSNSWSQSSQSQSSQDSNSWSQSSQSQGSNSFTG) has biased composition (low complexity). A glycan (N-linked (GlcNAc...) asparagine) is linked at Asn305. A compositionally biased stretch (gly residues) spans 348-358 (AGTGSGSGSVS). The segment covering 359 to 381 (GSGSASGSSSFSGSSNGGNSNSG) has biased composition (low complexity). Residue Asn394 is part of the active site.

This sequence belongs to the peptidase C1 family.

The protein localises to the lysosome. This Dictyostelium discoideum (Social amoeba) protein is Cysteine proteinase 6 (cprF).